The sequence spans 466 residues: Delta-1 crystallin (466 aa).

It belongs to the lyase 1 family. Argininosuccinate lyase subfamily. Homotetramer. Eye lens.

Delta crystallin, the principal crystallin in embryonic lens, is found only in birds and reptiles. The polypeptide is Delta-1 crystallin (ASL1) (Meleagris gallopavo (Wild turkey)).